We begin with the raw amino-acid sequence, 432 residues long: MNLKDPICAIATPPGKGAIGVVRLSGEGALEIAARVWRGKDPRRLKGGRFALGEVVDPKTGEAIDQAILLVFRAPRSYTGEDLVEFQTHGSPAVLRRVMEVLVAEGARPAGRGEFTFRAYLNGKMDLAQAEAVLALIEAEGELARRQALRALEGALSRRIEALENRLLNLLAHIQALLDYPEEGVEPLEAERTIREVLAEVEALLAQAKASRLAQKGARLALIGAPNAGKSSLLNALLGYERALVSPIPGTTRDYLEAPLELFGIPLVAVDTAGVRETEDPVERMGVERALGIAEEADLVLYVVDRSQPKPAPPPLPWARTLKVATKSDLPPAWEDPEFLPVSSLTGEGLDRLKEAVREALLGREGGEVLLTERQVEALLRARERLEEALSLPEDLMGLALEEAARALALLTGKEVAEEVVARVFQNFCVGK.

Residues Arg-23, Glu-85, and Lys-124 each coordinate (6S)-5-formyl-5,6,7,8-tetrahydrofolate. Positions 217 to 362 (GARLALIGAP…LKEAVREALL (146 aa)) constitute a TrmE-type G domain. A K(+)-binding site is contributed by Asn-227. GTP-binding positions include 227-232 (NAGKSS), 246-252 (SPIPGTT), and 271-274 (DTAG). Residue Ser-231 coordinates Mg(2+). The K(+) site is built by Ser-246, Ile-248, and Thr-251. Mg(2+) is bound at residue Thr-252. Lys-432 is a (6S)-5-formyl-5,6,7,8-tetrahydrofolate binding site.

This sequence belongs to the TRAFAC class TrmE-Era-EngA-EngB-Septin-like GTPase superfamily. TrmE GTPase family. In terms of assembly, homodimer. Heterotetramer of two MnmE and two MnmG subunits. K(+) serves as cofactor.

The protein localises to the cytoplasm. Exhibits a very high intrinsic GTPase hydrolysis rate. Involved in the addition of a carboxymethylaminomethyl (cmnm) group at the wobble position (U34) of certain tRNAs, forming tRNA-cmnm(5)s(2)U34. This chain is tRNA modification GTPase MnmE, found in Thermus thermophilus (strain ATCC 27634 / DSM 579 / HB8).